The sequence spans 209 residues: Ribonuclease HII (209 aa).

An RNase H type-2 domain is found at 25-209 (RRIAGIDEAG…ATFRGVREYL (185 aa)). A divalent metal cation-binding residues include Asp-31, Glu-32, and Asp-123.

This sequence belongs to the RNase HII family. Requires Mn(2+) as cofactor. It depends on Mg(2+) as a cofactor.

It localises to the cytoplasm. The catalysed reaction is Endonucleolytic cleavage to 5'-phosphomonoester.. In terms of biological role, endonuclease that specifically degrades the RNA of RNA-DNA hybrids. The chain is Ribonuclease HII from Syntrophotalea carbinolica (strain DSM 2380 / NBRC 103641 / GraBd1) (Pelobacter carbinolicus).